Reading from the N-terminus, the 79-residue chain is Dolichol phosphate-mannose biosynthesis regulatory protein (79 aa).

The next 2 membrane-spanning stretches (helical) occupy residues isoleucine 8–isoleucine 28 and isoleucine 50–leucine 70.

Belongs to the DPM2 family. Component of the dolichol-phosphate mannose (DPM) synthase complex composed of dpm1, dpm2 and dpm3.

Its subcellular location is the endoplasmic reticulum membrane. It functions in the pathway protein modification; protein glycosylation. In terms of biological role, regulates the biosynthesis of dolichol phosphate-mannose. Regulatory subunit of the dolichol-phosphate mannose (DPM) synthase complex; essential for the ER localization and stable expression of dpm1. The chain is Dolichol phosphate-mannose biosynthesis regulatory protein (dpm2-1) from Dictyostelium discoideum (Social amoeba).